The chain runs to 116 residues: Large ribosomal subunit protein bL21c (116 aa).

The protein belongs to the bacterial ribosomal protein bL21 family. Part of the 50S ribosomal subunit.

Its subcellular location is the plastid. The protein localises to the chloroplast. Its function is as follows. This protein binds to 23S rRNA. This Emiliania huxleyi (Coccolithophore) protein is Large ribosomal subunit protein bL21c.